The following is a 436-amino-acid chain: 3-ketoacyl-CoA thiolase (436 aa).

Catalysis depends on Cys99, which acts as the Acyl-thioester intermediate. Catalysis depends on proton acceptor residues His392 and Cys422.

It belongs to the thiolase-like superfamily. Thiolase family. As to quaternary structure, heterotetramer of two alpha chains (FadJ) and two beta chains (FadI).

The protein localises to the cytoplasm. The catalysed reaction is an acyl-CoA + acetyl-CoA = a 3-oxoacyl-CoA + CoA. Its pathway is lipid metabolism; fatty acid beta-oxidation. Functionally, catalyzes the final step of fatty acid oxidation in which acetyl-CoA is released and the CoA ester of a fatty acid two carbons shorter is formed. This is 3-ketoacyl-CoA thiolase from Shigella boydii serotype 4 (strain Sb227).